The chain runs to 253 residues: Transcriptional regulatory protein TcrA (253 aa).

In terms of domain architecture, Response regulatory spans 24 to 138 (RILVVEDEPK…ELFARLRALS (115 aa)). D73 is subject to 4-aspartylphosphate. The ompR/PhoB-type DNA-binding region spans 146–244 (PPTLEAGDLR…IRGAGYRLRK (99 aa)).

As to quaternary structure, interacts with HK2. In terms of processing, phosphorylated by HK2.

The protein localises to the cytoplasm. Member of the three-protein two-component system HK1/HK2/TcrA. The sequence is that of Transcriptional regulatory protein TcrA (tcrA) from Mycobacterium tuberculosis (strain ATCC 25618 / H37Rv).